A 283-amino-acid chain; its full sequence is CDP-abequose synthase (283 aa).

NAD(+)-binding positions include 7-13 (GGSGYIG), 48-49 (EF), Tyr129, and Lys133. Tyr129 acts as the Proton acceptor in catalysis.

This sequence belongs to the NAD(P)-dependent epimerase/dehydratase family.

It carries out the reaction CDP-alpha-D-abequose + NADP(+) = CDP-4-dehydro-3,6-dideoxy-alpha-D-glucose + NADPH + H(+). It participates in bacterial outer membrane biogenesis; LPS O-antigen biosynthesis. In terms of biological role, the CDP-abequose synthase is involved in lipopolysaccharides (LPS) synthesis containing abequose which are important antigens of the cell surface responsible for the serological O specificity. Derivatives of the 3,6-dideoxyhexose group have a particular highly immunogenic character. The protein is CDP-abequose synthase (rfbJ) of Yersinia pseudotuberculosis.